The sequence spans 94 residues: Co-chaperonin GroES (94 aa).

It belongs to the GroES chaperonin family. As to quaternary structure, heptamer of 7 subunits arranged in a ring. Interacts with the chaperonin GroEL.

Its subcellular location is the cytoplasm. In terms of biological role, together with the chaperonin GroEL, plays an essential role in assisting protein folding. The GroEL-GroES system forms a nano-cage that allows encapsulation of the non-native substrate proteins and provides a physical environment optimized to promote and accelerate protein folding. GroES binds to the apical surface of the GroEL ring, thereby capping the opening of the GroEL channel. This is Co-chaperonin GroES from Pediococcus pentosaceus (strain ATCC 25745 / CCUG 21536 / LMG 10740 / 183-1w).